The chain runs to 220 residues: Large ribosomal subunit protein uL3 (220 aa).

A disordered region spans residues 132 to 153 (SGRASHGNSRSHNVPGSIGMAQ). Residues 133–145 (GRASHGNSRSHNV) show a composition bias toward polar residues. Q153 carries the post-translational modification N5-methylglutamine.

The protein belongs to the universal ribosomal protein uL3 family. Part of the 50S ribosomal subunit. Forms a cluster with proteins L14 and L19. Methylated by PrmB.

In terms of biological role, one of the primary rRNA binding proteins, it binds directly near the 3'-end of the 23S rRNA, where it nucleates assembly of the 50S subunit. The sequence is that of Large ribosomal subunit protein uL3 from Ralstonia nicotianae (strain ATCC BAA-1114 / GMI1000) (Ralstonia solanacearum).